The primary structure comprises 155 residues: S-ribosylhomocysteine lyase (155 aa).

Fe cation is bound by residues histidine 54, histidine 58, and cysteine 122.

The protein belongs to the LuxS family. In terms of assembly, homodimer. Fe cation is required as a cofactor.

It carries out the reaction S-(5-deoxy-D-ribos-5-yl)-L-homocysteine = (S)-4,5-dihydroxypentane-2,3-dione + L-homocysteine. Its function is as follows. Involved in the synthesis of autoinducer 2 (AI-2) which is secreted by bacteria and is used to communicate both the cell density and the metabolic potential of the environment. The regulation of gene expression in response to changes in cell density is called quorum sensing. Catalyzes the transformation of S-ribosylhomocysteine (RHC) to homocysteine (HC) and 4,5-dihydroxy-2,3-pentadione (DPD). The protein is S-ribosylhomocysteine lyase of Deinococcus deserti (strain DSM 17065 / CIP 109153 / LMG 22923 / VCD115).